The sequence spans 47 residues: MALINFDLLAELPVAYQAFAPTVDVLPLIPLFFFLLVFVWQAAVGFR.

The propeptide occupies 1–10 (MALINFDLLA). The chain crosses the membrane as a helical span at residues 26-46 (LPLIPLFFFLLVFVWQAAVGF).

It belongs to the PsbK family. As to quaternary structure, PSII is composed of 1 copy each of membrane proteins PsbA, PsbB, PsbC, PsbD, PsbE, PsbF, PsbH, PsbI, PsbJ, PsbK, PsbL, PsbM, PsbT, PsbX, PsbY, Psb30/Ycf12, peripheral proteins PsbO, CyanoQ (PsbQ), PsbU, PsbV and a large number of cofactors. It forms dimeric complexes.

The protein resides in the cellular thylakoid membrane. In terms of biological role, one of the components of the core complex of photosystem II (PSII). PSII is a light-driven water:plastoquinone oxidoreductase that uses light energy to abstract electrons from H(2)O, generating O(2) and a proton gradient subsequently used for ATP formation. It consists of a core antenna complex that captures photons, and an electron transfer chain that converts photonic excitation into a charge separation. The sequence is that of Photosystem II reaction center protein K from Prochlorococcus marinus (strain NATL1A).